A 714-amino-acid polypeptide reads, in one-letter code: Polyribonucleotide nucleotidyltransferase (714 aa).

D488 and D494 together coordinate Mg(2+). Residues 555-614 (PRIEVMNIPTDKIRDVIGSGGKVIREIVEKTGAKINIEDDGTVKIASSNGKEIEAAKKWI) form the KH domain. The 69-residue stretch at 624–692 (GEIYEGTVVK…ERGKVRLSMK (69 aa)) folds into the S1 motif domain.

Belongs to the polyribonucleotide nucleotidyltransferase family. Mg(2+) serves as cofactor.

It is found in the cytoplasm. The catalysed reaction is RNA(n+1) + phosphate = RNA(n) + a ribonucleoside 5'-diphosphate. Its function is as follows. Involved in mRNA degradation. Catalyzes the phosphorolysis of single-stranded polyribonucleotides processively in the 3'- to 5'-direction. This is Polyribonucleotide nucleotidyltransferase from Brucella suis biovar 1 (strain 1330).